The chain runs to 228 residues: UPF0173 metal-dependent hydrolase LMHCC_0991 (228 aa).

The protein belongs to the UPF0173 family.

This Listeria monocytogenes serotype 4a (strain HCC23) protein is UPF0173 metal-dependent hydrolase LMHCC_0991.